Reading from the N-terminus, the 509-residue chain is Phosphoprotein (509 aa).

Disordered stretches follow at residues 33–84 (LESW…LGFR), 131–236 (VQAN…DGNS), and 256–281 (PESR…SAKT). Residues 44–65 (GRATPNPDTSEGDHQNINQSCS) are compositionally biased toward polar residues. Positions 146–157 (DGSDDSDVDSGP) are enriched in acidic residues. Position 151 is a phosphoserine (S151). Over residues 178–187 (RSTDVEKLEG) the composition is skewed to basic and acidic residues. Polar residues predominate over residues 221 to 236 (SRPSAQSIKKGTDGNS). Residues 303-376 (SEFEYEDDLF…LSSIMIAIPG (74 aa)) are multimerization. Residues 459-509 (SSRSVIRSIIKSSKLNIDHKDYLLDLLNDVKGSKDLKEFHKMLTAILAKQP) form an interaction with the nucleocapsid (N-RNA) region.

The protein belongs to the morbillivirus P protein family. In terms of assembly, homotetramer. Interacts (via multimerization domain) with polymerase L; this interaction forms the polymerase L-P complex. Interacts (via N-terminus) with N0 (via Ncore); this interaction allows P to chaperon N0 to avoid N polymerization before encapsidation. Interacts (via C-terminus) with N-RNA template; this interaction positions the polymerase on the template for both transcription and replication. Interacts with host ISG15; this interaction disrupts the activity of the N0-P complex. In terms of processing, phosphorylation on serines by host CK2 is necessary for the formation of viral factories.

In terms of biological role, essential cofactor of the RNA polymerase L that plays a central role in the transcription and replication by forming the polymerase complex with RNA polymerase L and recruiting L to the genomic N-RNA template for RNA synthesis. Also plays a central role in the encapsidation of nascent RNA chains by forming the encapsidation complex with the nucleocapsid protein N (N-P complex). Acts as a chaperone for newly synthesized free N protein, so-called N0, allowing encapsidation of nascent RNA chains during replication. The nucleoprotein protein N prevents excessive phosphorylation of P, which leads to down-regulation of viral transcription/ replication. Participates, together with N, in the formation of viral factories (viroplasms), which are large inclusions in the host cytoplasm where replication takes place. The chain is Phosphoprotein (P/V) from Capra hircus (Goat).